A 373-amino-acid chain; its full sequence is Ferroptosis suppressor protein 1 (373 aa).

A lipid anchor (N-myristoyl glycine) is attached at glycine 2. The chain crosses the membrane as a helical span at residues 13–29; sequence VVVVGGGFGGTAAASLL. Residues 17–21, arginine 53, and valine 81 each bind 6-hydroxy-FAD; that span reads GGGFG. Lysine 167 carries the post-translational modification N6-acetyllysine. Aspartate 284 serves as a coordination point for 6-hydroxy-FAD.

It belongs to the FAD-dependent oxidoreductase family. 6-hydroxy-FAD serves as cofactor. In terms of processing, N-myristoylation at Gly-2 mediates the recruitment to lipid droplets and plasma membrane. Post-translationally, acetylation at Lys-167 prevents AIFM2 ubiquitination and degradation, thereby inhibiting ferroptosis. KAT2B mediates acetylation at Lys-167, while HDAC3 removes it. Ubiquitinated. AIFM2 undergoes 'Lys-29'-ubiquitination and proteasomal degradation, which is inhibited by acetylation at Lys-167.

The protein localises to the lipid droplet. It is found in the cell membrane. Its subcellular location is the cytoplasm. The protein resides in the mitochondrion membrane. It localises to the nucleus. It carries out the reaction ubiquinone-10 + NADH + H(+) = ubiquinol-10 + NAD(+). The catalysed reaction is phylloquinone + NADH + H(+) = phylloquinol + NAD(+). The enzyme catalyses menaquinone-4 + NADH + H(+) = menaquinol-4 + NAD(+). It catalyses the reaction menadione + NADH + H(+) = menadiol + NAD(+). The modification by 4-hydroxy-2-nonenal (HNE) adduction in mitochondria results in loss of the oxidoreductase activity and activation of a novel function in mitochondrial oxidative stress signaling. In terms of biological role, a NAD(P)H-dependent oxidoreductase that acts as a key inhibitor of ferroptosis. At the plasma membrane, catalyzes reduction of coenzyme Q/ubiquinone-10 to ubiquinol-10, a lipophilic radical-trapping antioxidant that prevents lipid oxidative damage and consequently ferroptosis. Acts in parallel to GPX4 to suppress phospholipid peroxidation and ferroptosis. This anti-ferroptotic function is independent of cellular glutathione levels. Also acts as a potent radical-trapping antioxidant by mediating warfarin-resistant vitamin K reduction in the canonical vitamin K cycle: catalyzes NAD(P)H-dependent reduction of vitamin K (phylloquinone, menaquinone-4 and menadione) to hydroquinone forms. Hydroquinones act as potent radical-trapping antioxidants inhibitor of phospholipid peroxidation and ferroptosis. May play a role in mitochondrial stress signaling. Upon oxidative stress, associates with the lipid peroxidation end product 4-hydroxy-2-nonenal (HNE) forming a lipid adduct devoid of oxidoreductase activity, which then translocates from mitochondria into the nucleus triggering DNA damage and cell death. The protein is Ferroptosis suppressor protein 1 (AIFM2) of Taeniopygia guttata (Zebra finch).